Consider the following 446-residue polypeptide: tRNA modification GTPase MnmE (446 aa).

The (6S)-5-formyl-5,6,7,8-tetrahydrofolate site is built by R23, E81, and K120. One can recognise a TrmE-type G domain in the interval 216–370; that stretch reads GFKVAIIGKP…LIKELELILD (155 aa). N226 serves as a coordination point for K(+). GTP contacts are provided by residues 226–231, 245–251, and 270–273; these read NVGKSS, SDIAGTT, and DTAG. S230 contributes to the Mg(2+) binding site. K(+)-binding residues include S245, I247, and T250. Position 251 (T251) interacts with Mg(2+). K446 provides a ligand contact to (6S)-5-formyl-5,6,7,8-tetrahydrofolate.

This sequence belongs to the TRAFAC class TrmE-Era-EngA-EngB-Septin-like GTPase superfamily. TrmE GTPase family. Homodimer. Heterotetramer of two MnmE and two MnmG subunits. It depends on K(+) as a cofactor.

The protein localises to the cytoplasm. Exhibits a very high intrinsic GTPase hydrolysis rate. Involved in the addition of a carboxymethylaminomethyl (cmnm) group at the wobble position (U34) of certain tRNAs, forming tRNA-cmnm(5)s(2)U34. This chain is tRNA modification GTPase MnmE, found in Aliarcobacter butzleri (strain RM4018) (Arcobacter butzleri).